A 503-amino-acid polypeptide reads, in one-letter code: Probable DNA double-strand break repair helicase HerA (503 aa).

Residues Arg-122, Gly-131–Asn-136, and Lys-478–Ile-479 each bind ATP.

This sequence belongs to the HerA family.

It catalyses the reaction Couples ATP hydrolysis with the unwinding of duplex DNA at the replication fork by translocating in the 5'-3' direction. This creates two antiparallel DNA single strands (ssDNA). The leading ssDNA polymer is the template for DNA polymerase III holoenzyme which synthesizes a continuous strand.. The catalysed reaction is ATP + H2O = ADP + phosphate + H(+). The enzyme catalyses Couples ATP hydrolysis with the unwinding of duplex DNA by translocating in the 3'-5' direction.. Functionally, involved in DNA double-strand break (DSB) repair. Probably acts with NurA to stimulate resection of the 5' strand and produce the long 3' single-strand that is required for RadA loading. Has DNA-dependent ATPase activity and DNA helicase activity. The sequence is that of Probable DNA double-strand break repair helicase HerA from Methanocaldococcus jannaschii (strain ATCC 43067 / DSM 2661 / JAL-1 / JCM 10045 / NBRC 100440) (Methanococcus jannaschii).